The sequence spans 358 residues: U5 small nuclear ribonucleoprotein 40 kDa protein (358 aa).

Lys-18 is covalently cross-linked (Glycyl lysine isopeptide (Lys-Gly) (interchain with G-Cter in SUMO2)). Arg-21 is modified (asymmetric dimethylarginine). WD repeat units follow at residues 65-104, 108-147, 150-190, 192-231, 234-273, 284-323, and 326-358; these read GHEGEVYCCKFHPNGSTLASAGFDRLILLWNVYGDCDNYA, GHSGAVMELHYNTDGSMLFSASTDKTVAVWDSETGERVKR, GHTS…AIQT, QNTYQVLAVTFNDTSDQIISGGIDNDIKVWDLRQNKLTYT, GHADSVTGLSLSSEGSYLLSNAMDNTVRVWDVRPFAPKER, NFEKNLLRCSWSPDGSKIAAGSADRFVYVWDTTSRRILYK, and GHAGSINEVAFHPDEPIILSASSDKRLYMGEIQ. Residue Lys-271 forms a Glycyl lysine isopeptide (Lys-Gly) (interchain with G-Cter in SUMO2) linkage.

In terms of assembly, component of the pre-catalytic and catalytic spliceosome complexes. Component of the postcatalytic spliceosome P complex. Part of the U5 snRNP complex. Interacts with PRPF8. Component of the U4/U6-U5 tri-snRNP complex composed of the U4, U6 and U5 snRNAs and at least PRPF3, PRPF4, PRPF6, PRPF8, PRPF31, SNRNP200, TXNL4A, WDR57, SNRNP40, DDX23, CD2BP2, PPIH, SNU13, EFTUD2, SART1 and USP39. Component of the minor spliceosome, which splices U12-type introns.

It is found in the nucleus. Its function is as follows. Required for pre-mRNA splicing as component of the activated spliceosome. Component of the U5 small nuclear ribonucleoprotein (snRNP) complex and the U4/U6-U5 tri-snRNP complex, building blocks of the spliceosome. As a component of the minor spliceosome, involved in the splicing of U12-type introns in pre-mRNAs. The chain is U5 small nuclear ribonucleoprotein 40 kDa protein (SNRNP40) from Bos taurus (Bovine).